Reading from the N-terminus, the 429-residue chain is Enolase (429 aa).

Glutamine 164 contributes to the (2R)-2-phosphoglycerate binding site. Residue glutamate 206 is the Proton donor of the active site. Mg(2+) contacts are provided by aspartate 243, glutamate 286, and aspartate 313. Positions 338, 367, 368, and 389 each coordinate (2R)-2-phosphoglycerate. Lysine 338 (proton acceptor) is an active-site residue.

It belongs to the enolase family. As to quaternary structure, homooctamer. Forms a ring-shaped particle. The cofactor is Mg(2+).

The protein localises to the cytoplasm. It is found in the secreted. It localises to the cell surface. The enzyme catalyses (2R)-2-phosphoglycerate = phosphoenolpyruvate + H2O. Its pathway is carbohydrate degradation; glycolysis; pyruvate from D-glyceraldehyde 3-phosphate: step 4/5. Its activity is regulated as follows. Inhibited by fluoride and phosphate. In terms of biological role, catalyzes the reversible conversion of 2-phosphoglycerate (2-PG) into phosphoenolpyruvate (PEP). It is essential for the degradation of carbohydrates via glycolysis. The sequence is that of Enolase from Thermotoga maritima (strain ATCC 43589 / DSM 3109 / JCM 10099 / NBRC 100826 / MSB8).